We begin with the raw amino-acid sequence, 977 residues long: Fc receptor-like protein 5 (977 aa).

The first 15 residues, 1–15 (MLLWVILLVLAPVSG), serve as a signal peptide directing secretion. At 16–851 (QFARTPRPII…ANRSGPFATG (836 aa)) the chain is on the extracellular side. Ig-like C2-type domains lie at 23-101 (PIIF…LDFS), 188-271 (PFTR…SVIS), 287-374 (PVLT…LSVT), 380-463 (PVLN…KAVS), 473-556 (PVLT…EVVS), 566-651 (PILT…ISLS), 659-744 (PILT…VTLK), and 752-834 (PVLT…ETVT). 3 disulfides stabilise this stretch: C44/C85, C211/C260, and C308/C355. An N-linked (GlcNAc...) asparagine glycan is attached at N383. 5 cysteine pairs are disulfide-bonded: C401/C448, C494/C541, C587/C634, C680/C727, and C773/C819. A helical membrane pass occupies residues 852-872 (VAGGLLSIAGLAAGALLLYCW). The Cytoplasmic segment spans residues 873–977 (LSRKAGRKPA…LFLASSAPHR (105 aa)). The interval 879–898 (RKPASDPARSPSDSDSQEPT) is disordered. Residues 883–892 (SDPARSPSDS) show a composition bias toward low complexity. 4 consecutive short sequence motifs (ITIM motif) follow at residues 897–902 (PTYHNV), 910–915 (PVYTNA), 922–927 (VVYSEV), and 952–957 (IIYSEV).

As to quaternary structure, interacts with CR2. Interacts with CD19. In terms of tissue distribution, expressed in marginal zone B-cells, immunoblasts, tonsillar germinal center centrocytes and in the intraepithelial and interfollicular regions of the tonsil. Expressed in many lymphoma cell lines and on hairy cell leukemia cells. Isoform 1, isoform 3, isoform 4 and isoform 5 are detected in lymph node, spleen, bone marrow, and small intestine with preponderance of isoform 3. Expressed in mature and memory B-cells and down-regulated in germinal center cells (at protein level).

The protein localises to the cell membrane. In terms of biological role, plays an important role in B-cell response to antigen that acts both as a negative or positive coreceptor. Inhibits B-cell receptor (BCR) signaling in the absence of CR2 stimulation but engagement with CR2 and the BCR lead to a superior calcium response compared to CR2 and BCR costimulation. May be involved in B-cell development and differentiation in peripheral lymphoid organs and may be useful markers of B-cell stages. May have an immunoregulatory role in marginal zone B-cells. May play a role in fertilization. This Homo sapiens (Human) protein is Fc receptor-like protein 5 (FCRL5).